We begin with the raw amino-acid sequence, 290 residues long: MGTLANHAFSKMNGIGNEIVVVDLRDRPAAVTAEEARAVASPGGVPYDQLMVLQPPRLPGTEAFVSIYNNDGSEANACGNGMRCVARQVFEATGKAALTFETRAGLLSCWQGPAPGLYTVDMGPPKFGWRDIPLAEEFRDTRYIELQVGPIDAPVLHSPSVVSMGNPHAIFWVDDVNAHDLERFGPLLENHPIFPERANITLAHIAGRDRIVMRTWERGAGMTKACGSAACATAVAAARLKRADRVVDMVLPGGGLTIEWRERDDHVLMTGPAVFEYAGTFDPALFASVA.

Residues N17, Q49, and N69 each contribute to the substrate site. The active-site Proton donor is C78. Residues 79 to 80 (GN), N166, N199, and 217 to 218 (ER) each bind substrate. The active-site Proton acceptor is the C226. 227-228 (GS) serves as a coordination point for substrate.

This sequence belongs to the diaminopimelate epimerase family. In terms of assembly, homodimer.

It is found in the cytoplasm. The enzyme catalyses (2S,6S)-2,6-diaminopimelate = meso-2,6-diaminopimelate. The protein operates within amino-acid biosynthesis; L-lysine biosynthesis via DAP pathway; DL-2,6-diaminopimelate from LL-2,6-diaminopimelate: step 1/1. In terms of biological role, catalyzes the stereoinversion of LL-2,6-diaminopimelate (L,L-DAP) to meso-diaminopimelate (meso-DAP), a precursor of L-lysine and an essential component of the bacterial peptidoglycan. In Nitrobacter hamburgensis (strain DSM 10229 / NCIMB 13809 / X14), this protein is Diaminopimelate epimerase.